Reading from the N-terminus, the 207-residue chain is Large ribosomal subunit protein uL4 (207 aa).

It belongs to the universal ribosomal protein uL4 family. In terms of assembly, part of the 50S ribosomal subunit.

One of the primary rRNA binding proteins, this protein initially binds near the 5'-end of the 23S rRNA. It is important during the early stages of 50S assembly. It makes multiple contacts with different domains of the 23S rRNA in the assembled 50S subunit and ribosome. In terms of biological role, forms part of the polypeptide exit tunnel. In Pelagibacter ubique (strain HTCC1062), this protein is Large ribosomal subunit protein uL4.